We begin with the raw amino-acid sequence, 582 residues long: Dihydroxy-acid dehydratase 3 (582 aa).

Cys67 is a binding site for [2Fe-2S] cluster. Position 99 (Asp99) interacts with Mg(2+). Residue Cys140 participates in [2Fe-2S] cluster binding. Mg(2+) is bound by residues Asp141 and Lys142. Lys142 is subject to N6-carboxylysine. Cys212 provides a ligand contact to [2Fe-2S] cluster. Position 462 (Glu462) interacts with Mg(2+). The active-site Proton acceptor is the Ser488.

The protein belongs to the IlvD/Edd family. Homodimer. [2Fe-2S] cluster is required as a cofactor. Requires Mg(2+) as cofactor.

It carries out the reaction (2R)-2,3-dihydroxy-3-methylbutanoate = 3-methyl-2-oxobutanoate + H2O. It catalyses the reaction (2R,3R)-2,3-dihydroxy-3-methylpentanoate = (S)-3-methyl-2-oxopentanoate + H2O. The protein operates within amino-acid biosynthesis; L-isoleucine biosynthesis; L-isoleucine from 2-oxobutanoate: step 3/4. Its pathway is amino-acid biosynthesis; L-valine biosynthesis; L-valine from pyruvate: step 3/4. In terms of biological role, functions in the biosynthesis of branched-chain amino acids. Catalyzes the dehydration of (2R,3R)-2,3-dihydroxy-3-methylpentanoate (2,3-dihydroxy-3-methylvalerate) into 2-oxo-3-methylpentanoate (2-oxo-3-methylvalerate) and of (2R)-2,3-dihydroxy-3-methylbutanoate (2,3-dihydroxyisovalerate) into 2-oxo-3-methylbutanoate (2-oxoisovalerate), the penultimate precursor to L-isoleucine and L-valine, respectively. The chain is Dihydroxy-acid dehydratase 3 from Bradyrhizobium diazoefficiens (strain JCM 10833 / BCRC 13528 / IAM 13628 / NBRC 14792 / USDA 110).